The sequence spans 372 residues: DNA primase small subunit PriS (372 aa).

Catalysis depends on residues aspartate 95, aspartate 97, and aspartate 280.

The protein belongs to the eukaryotic-type primase small subunit family. In terms of assembly, heterodimer of a small subunit (PriS) and a large subunit (PriL). Requires Mg(2+) as cofactor. Mn(2+) serves as cofactor.

Catalytic subunit of DNA primase, an RNA polymerase that catalyzes the synthesis of short RNA molecules used as primers for DNA polymerase during DNA replication. The small subunit contains the primase catalytic core and has DNA synthesis activity on its own. Binding to the large subunit stabilizes and modulates the activity, increasing the rate of DNA synthesis while decreasing the length of the DNA fragments, and conferring RNA synthesis capability. The DNA polymerase activity may enable DNA primase to also catalyze primer extension after primer synthesis. May also play a role in DNA repair. The protein is DNA primase small subunit PriS of Cenarchaeum symbiosum (strain A).